A 243-amino-acid chain; its full sequence is tRNA1(Val) (adenine(37)-N6)-methyltransferase (243 aa).

Belongs to the methyltransferase superfamily. tRNA (adenine-N(6)-)-methyltransferase family.

Its subcellular location is the cytoplasm. The enzyme catalyses adenosine(37) in tRNA1(Val) + S-adenosyl-L-methionine = N(6)-methyladenosine(37) in tRNA1(Val) + S-adenosyl-L-homocysteine + H(+). Functionally, specifically methylates the adenine in position 37 of tRNA(1)(Val) (anticodon cmo5UAC). This Shewanella woodyi (strain ATCC 51908 / MS32) protein is tRNA1(Val) (adenine(37)-N6)-methyltransferase.